The primary structure comprises 271 residues: 3-methyl-2-oxobutanoate hydroxymethyltransferase 1 (271 aa).

Mg(2+) contacts are provided by aspartate 53 and aspartate 92. Residues 53–54 (DS), aspartate 92, and lysine 120 each bind 3-methyl-2-oxobutanoate. Glutamate 122 is a Mg(2+) binding site. The active-site Proton acceptor is the glutamate 189.

This sequence belongs to the PanB family. Homodecamer; pentamer of dimers. Mg(2+) serves as cofactor.

The protein localises to the cytoplasm. The enzyme catalyses 3-methyl-2-oxobutanoate + (6R)-5,10-methylene-5,6,7,8-tetrahydrofolate + H2O = 2-dehydropantoate + (6S)-5,6,7,8-tetrahydrofolate. It participates in cofactor biosynthesis; (R)-pantothenate biosynthesis; (R)-pantoate from 3-methyl-2-oxobutanoate: step 1/2. In terms of biological role, catalyzes the reversible reaction in which hydroxymethyl group from 5,10-methylenetetrahydrofolate is transferred onto alpha-ketoisovalerate to form ketopantoate. The chain is 3-methyl-2-oxobutanoate hydroxymethyltransferase 1 from Burkholderia ambifaria (strain ATCC BAA-244 / DSM 16087 / CCUG 44356 / LMG 19182 / AMMD) (Burkholderia cepacia (strain AMMD)).